The chain runs to 141 residues: Hemoglobin subunit alpha-1/2 (141 aa).

A Globin domain is found at 1-141 (VLSPADKTNV…VSTVLTSKYR (141 aa)). Residue Ser-3 is modified to Phosphoserine. Residue Lys-7 is modified to N6-succinyllysine. Thr-8 carries the post-translational modification Phosphothreonine. Lys-11 is subject to N6-succinyllysine. Position 16 is an N6-acetyllysine; alternate (Lys-16). At Lys-16 the chain carries N6-succinyllysine; alternate. The residue at position 24 (Tyr-24) is a Phosphotyrosine. Residue Ser-35 is modified to Phosphoserine. The residue at position 40 (Lys-40) is an N6-succinyllysine. A Phosphoserine modification is found at Ser-49. Residue His-58 participates in O2 binding. His-87 serves as a coordination point for heme b. Ser-102 carries the phosphoserine modification. Phosphothreonine is present on Thr-108. The residue at position 124 (Ser-124) is a Phosphoserine. 2 positions are modified to phosphothreonine: Thr-134 and Thr-137. Ser-138 is subject to Phosphoserine.

The protein belongs to the globin family. Heterotetramer of two alpha chains and two beta chains. Red blood cells.

Its function is as follows. Involved in oxygen transport from the lung to the various peripheral tissues. This Mustela putorius (European polecat) protein is Hemoglobin subunit alpha-1/2.